Consider the following 1577-residue polypeptide: MILLHFVYSLWALLLIPLINAEEFTPKVTKTIAQDSFEILSFDDSNTLIRKQDASVTISFDDGETWEKVEGIEDEITWIYIDPFNRHDRAVATSMYESRLYITNDQGKSWERITLPDSEKNISSRGCYIETHPLNKNYFLAKCNYCEKTEVDNEENSGDEEGAPVIFNITHCTDKVFASNDGGKSFSEIKSSLERNENSAISISDCGFAKTGKDSDLESSDTSIICLFQNMQLIMDEFSSPYTESKLVLTTDWGKSLKEFDQFKDKVVNGYRILKSHMVVITQGDRYNDMSSMDVWVSNDLSNFKMAYMPTQLRHSMQGEIYEDAMGRIILPMSRERSDQEEDKGIVSEILISDSQGLKFSPIPWTANEVFGYINLYQPTYLKGTMIASLYPLSRRRNRKGKAKGVKNKGVTKISVDNGLTWTVLKVVDPDNADSFDCDITDFENCSLQNMFYTREGSTPTAGILMTTGIVGDGSVFDWGDQRTFISRDGGLTWKLAFDFPCLYAVGDYGNVIVAIPYNADEDDDPQSEFYYSLDQGKTWTEYQLETTIYPNEVMNTTPDGSGAKFILNGFTLAHMDGTTNFIYAIDFSTAFNDKTCEENDFEDWNLAEGKCVNGVKYKIRRRKQDAQCLVKKVFEDLQLFETACDKCTEADYECAFEFVRDATGKCVPDYNLIVLSDVCDKTKKKTVPVKPLQLVKGDKCKKPMTVKSVDISCEGVPKKGTNDKEIVVTENKFDFKIQFYQYFDTVTDESLLMINSRGEAYISHDGGQTIRRFDSNGETIIEVVFNPYYNSSAYLFGSKGSIFSTHDRGYSFMTAKLPEARQLGMPLDFNAKAQDTFIYYGGKNCESILSPECHAVAYLTNDGGETFTEMLDNAIHCEFAGSLFKYPSNEDMVMCQVKEKSSQTRSLVSSTDFFQDDKNTVFENIIGYLSTGGYIIVAVPHENNELRAYVTIDGTEFAEAKFPYDEDVGKQEAFTILESEKGSIFLHLATNLVPGRDFGNLLKSNSNGTSFVTLEHAVNRNTFGYVDFEKIQGLEGIILTNIVSNSDKVAENKEDKQLKTKITFNEGSDWNFLKPPKRDSEGKKFSCSSKSLDECSLHLHGYTERKDIRDTYSSGSALGMMFGVGNVGPNLLPYKECSTFFTTDGGETWAEVKKTPHQWEYGDHGGILVLVPENSETDSISYSTDFGKTWKDYKFCADKVLVKDITTVPRDSALRFLLFGEAADIGGSSFRTYTIDFRNIFERQCDFDITGKESADYKYSPLSSKSNCLFGHQTEFLRKTDENCFIGNIPLSEFSRNIKNCSCTRQDFECDYNFYKANDGTCKLVKGLSPANAADVCKKEPDLIEYFESSGYRKIPLSTCEGGLKLDAPSSPHACPGKEKEFKEKYSVSAGPFAFIFISILLIIFFAAWFVYDRGIRRNGGFARFGEIRLGDDGLIENNNTDRVVNNIVKSGFYVFSNIGSLLQHTKTNIAHVISKIRGRFGNRTGPSYSSLIHDQFLDEADDLLAGHDEDANDLSSFMDQGSNFEIEEDDVPTLEEEHTSYTDQPTTTDVPDALPEGNEENIDRPDSTAPSNENQ.

The first 21 residues, 1–21, serve as a signal peptide directing secretion; sequence MILLHFVYSLWALLLIPLINA. At 22-1391 the chain is on the lumenal side; that stretch reads EEFTPKVTKT…EFKEKYSVSA (1370 aa). BNR repeat units lie at residues 58–68 and 101–111; these read ISFDDGETWEK and YITNDQGKSWE. Asparagine 121 and asparagine 168 each carry an N-linked (GlcNAc...) asparagine glycan. 2 BNR repeats span residues 179-187 and 414-423; these read SNDGGKSFS and ISVDNGLTWT. Asparagine 445 is a glycosylation site (N-linked (GlcNAc...) asparagine). 3 BNR repeats span residues 485-495, 531-541, and 762-771; these read FISRDGGLTWK, YYSLDQGKTWT, and YISHDGGQTI. Asparagine 791 carries N-linked (GlcNAc...) asparagine glycosylation. The stretch at 859–869 is one BNR 8 repeat; it reads YLTNDGGETFT. Asparagine 1008 is a glycosylation site (N-linked (GlcNAc...) asparagine). 2 BNR repeats span residues 1141 to 1150 and 1183 to 1192; these read FFTTDGGETW and YSTDFGKTWK. Asparagine 1301 carries an N-linked (GlcNAc...) asparagine glycan. The chain crosses the membrane as a helical span at residues 1392–1412; that stretch reads GPFAFIFISILLIIFFAAWFV. Topologically, residues 1413-1577 are cytoplasmic; that stretch reads YDRGIRRNGG…DSTAPSNENQ (165 aa). The segment at 1531–1577 is disordered; it reads DDVPTLEEEHTSYTDQPTTTDVPDALPEGNEENIDRPDSTAPSNENQ.

It belongs to the VPS10-related sortilin family.

Its subcellular location is the golgi apparatus. It is found in the trans-Golgi network membrane. It localises to the prevacuolar compartment membrane. Its function is as follows. Functions as a sorting receptor in the Golgi compartment required for the intracellular sorting and delivery of soluble vacuolar proteins, like carboxypeptidase Y (CPY) and proteinase A. Executes multiple rounds of sorting by cycling between the late Golgi and a prevacuolar endosome-like compartment. Binds the Golgi-modified P2 form of CPY, and this interaction is dependent on the presence of an intact CPY vacuolar protein sorting signal. This is Vacuolar protein sorting/targeting protein PEP1 (PEP1) from Saccharomyces cerevisiae (strain JAY291) (Baker's yeast).